The primary structure comprises 397 residues: Riboflavin biosynthesis protein RibBA (397 aa).

The segment at 1-199 (MFHRIEEALE…IEDLIAYRRH (199 aa)) is DHBP synthase. Residues 26–27 (RE), aspartate 31, 138–142 (RAGHT), and glutamate 162 contribute to the D-ribulose 5-phosphate site. Glutamate 27 lines the Mg(2+) pocket. Residue histidine 141 coordinates Mg(2+). The segment at 200–397 (HETLVTREAE…VNKLGHLLNL (198 aa)) is GTP cyclohydrolase II. 250-254 (RVHSE) contributes to the GTP binding site. The Zn(2+) site is built by cysteine 255, cysteine 266, and cysteine 268. GTP contacts are provided by residues glutamine 271, 293-295 (EGR), and threonine 315. Aspartate 327 serves as the catalytic Proton acceptor; for GTP cyclohydrolase activity. Arginine 329 serves as the catalytic Nucleophile; for GTP cyclohydrolase activity. The GTP site is built by threonine 350 and lysine 355.

This sequence in the N-terminal section; belongs to the DHBP synthase family. The protein in the C-terminal section; belongs to the GTP cyclohydrolase II family. Mg(2+) serves as cofactor. Requires Mn(2+) as cofactor. The cofactor is Zn(2+).

The catalysed reaction is D-ribulose 5-phosphate = (2S)-2-hydroxy-3-oxobutyl phosphate + formate + H(+). The enzyme catalyses GTP + 4 H2O = 2,5-diamino-6-hydroxy-4-(5-phosphoribosylamino)-pyrimidine + formate + 2 phosphate + 3 H(+). Its pathway is cofactor biosynthesis; riboflavin biosynthesis; 2-hydroxy-3-oxobutyl phosphate from D-ribulose 5-phosphate: step 1/1. The protein operates within cofactor biosynthesis; riboflavin biosynthesis; 5-amino-6-(D-ribitylamino)uracil from GTP: step 1/4. Functionally, catalyzes the conversion of D-ribulose 5-phosphate to formate and 3,4-dihydroxy-2-butanone 4-phosphate. In terms of biological role, catalyzes the conversion of GTP to 2,5-diamino-6-ribosylamino-4(3H)-pyrimidinone 5'-phosphate (DARP), formate and pyrophosphate. The chain is Riboflavin biosynthesis protein RibBA from Bacillus cereus (strain ATCC 14579 / DSM 31 / CCUG 7414 / JCM 2152 / NBRC 15305 / NCIMB 9373 / NCTC 2599 / NRRL B-3711).